The following is a 170-amino-acid chain: UPF0316 protein CLJ_B0679 (170 aa).

2 helical membrane-spanning segments follow: residues Met1–Ile21 and Ile36–Ile56.

It belongs to the UPF0316 family.

It is found in the cell membrane. In Clostridium botulinum (strain 657 / Type Ba4), this protein is UPF0316 protein CLJ_B0679.